Reading from the N-terminus, the 250-residue chain is Triosephosphate isomerase (250 aa).

A substrate-binding site is contributed by 9–11 (NWK). H95 functions as the Electrophile in the catalytic mechanism. E167 functions as the Proton acceptor in the catalytic mechanism. Residues G173, S212, and 233–234 (GG) contribute to the substrate site.

This sequence belongs to the triosephosphate isomerase family. Homodimer.

It localises to the cytoplasm. It carries out the reaction D-glyceraldehyde 3-phosphate = dihydroxyacetone phosphate. Its pathway is carbohydrate biosynthesis; gluconeogenesis. It participates in carbohydrate degradation; glycolysis; D-glyceraldehyde 3-phosphate from glycerone phosphate: step 1/1. In terms of biological role, involved in the gluconeogenesis. Catalyzes stereospecifically the conversion of dihydroxyacetone phosphate (DHAP) to D-glyceraldehyde-3-phosphate (G3P). The chain is Triosephosphate isomerase from Psychromonas ingrahamii (strain DSM 17664 / CCUG 51855 / 37).